An 8922-amino-acid polypeptide reads, in one-letter code: Protein clarinet (8922 aa).

The tract at residues 11-35 is disordered; the sequence is SKGPPLEEVREESEEDAQVPEQVVS. Acidic residues predominate over residues 19 to 28; it reads VREESEEDAQ. The stretch at 385 to 405 forms a coiled coil; that stretch reads KDETKLILKSVEDKLETTEIE. 55 disordered regions span residues 527-579, 622-673, 687-860, 880-955, 971-1049, 1062-1139, 1151-1331, 1347-1420, 1444-1520, 1538-1619, 1632-1710, 1726-1801, 1820-1898, 1939-1992, 2032-2084, 2126-2175, 2194-2213, 2220-2246, 2329-2403, 2423-2497, 2516-2594, 2610-2684, 2704-2845, 2892-2963, 2983-3155, 3171-3249, 3268-3337, 3619-3639, 3995-4079, 4117-4169, 4181-4271, 4557-4624, 4636-4656, 4666-4685, 4730-4801, 4855-4899, 5004-5036, 5360-5379, 5390-5413, 5484-5511, 5540-5572, 6194-6303, 6354-6437, 6487-6510, 6577-6609, 6668-6691, 6728-6768, 6998-7018, 7045-7098, 7137-7175, 7202-7263, 7313-7350, 7598-7623, 7760-7797, and 7842-7881; these read QEAA…EPEL, IVIS…EPEL, LAEK…KEPE, SFEQ…EPEL, EQSS…EPEL, SSAE…MESR, IARI…EPEL, EQSS…VMES, SFEQ…PELT, SFEQ…EEID, SFEQ…LTQE, SFEQ…VPEL, VISE…LTQE, IVIS…SELT, IVIS…SKEP, QSSF…PVRL, IVIS…YDQD, SFEQ…KKPE, SFEQ…KPEL, SFEQ…KEPE, SFEQ…ERPF, SFEQ…MESK, SFEQ…PVML, SITP…PTTD, AEPV…QEEI, IVIS…PELT, SLAE…STTI, QASA…TQEE, EQSS…PVRL, SEQH…YERS, EQSS…GVTQ, PANP…PLQD, PEDF…NGLT, LAMF…RKES, RRSS…DTAL, KKQI…ENEV, PPIA…SQFG, AEPV…ESES, DVES…GSRM, SSKS…QIGI, ARFP…LDDL, NAET…SVAR, AEFE…VPPG, TERK…TSTS, ARSR…DDFD, FDGD…FEKP, EAPS…YPDR, KTTT…EIEE, DSVR…SPGM, TRRH…SRPT, and HIRQ…SSSV. Residues 531-552 show a composition bias toward basic and acidic residues; that stretch reads SDNHEKERSSATSKADYERSFD. The segment covering 760–776 has biased composition (basic and acidic residues); that stretch reads MESKEPELTQEEIDHIA. The segment covering 1062–1076 has biased composition (low complexity); sequence SSAEQSSFEQASTVP. Residues 1230–1244 show a composition bias toward basic and acidic residues; the sequence is MESKEPELTQEEIDH. The span at 1251-1261 shows a compositional bias: polar residues; sequence IAEQSSFEQAS. Composition is skewed to basic and acidic residues over residues 1606–1619 and 1700–1710; these read MESK…EEID and MESKEPELTQE. Composition is skewed to basic and acidic residues over residues 1888–1898 and 1982–1992; these read MESKEPELTQE and MESKESELTQE. A compositionally biased stretch (polar residues) spans 2194 to 2204; that stretch reads QSSFEQASTIT. The span at 2584-2594 shows a compositional bias: basic and acidic residues; the sequence is MESKEPELTQE. A compositionally biased stretch (basic and acidic residues) spans 2772–2788; the sequence is MESKEPELTQEEIDHIA. The span at 2793–2803 shows a compositional bias: polar residues; the sequence is LAEQSSFEQAS. Residues 3076-3085 are compositionally biased toward polar residues; the sequence is APSSSFEQAS. A compositionally biased stretch (polar residues) spans 4035-4044; sequence GTSFPDNAET. The segment covering 4065 to 4079 has biased composition (basic and acidic residues); it reads PVMKSKEPELTQEEI. Composition is skewed to polar residues over residues 4182 to 4195, 4223 to 4234, and 4255 to 4271; these read LAEQ…STIP, SATSGADYQQSF, and MEST…STTI. Residues 4571–4580 show a composition bias toward basic and acidic residues; it reads IVEKREDDKS. Positions 4581–4594 are enriched in polar residues; the sequence is NITSGADYQQSFDQ. Positions 4613 to 4624 are enriched in basic and acidic residues; it reads MESKEPELTQEE. The span at 4636–4645 shows a compositional bias: polar residues; that stretch reads EQSSFEQAST. Polar residues predominate over residues 4730 to 4739; the sequence is EQSSFEQAST. Low complexity predominate over residues 4871 to 4890; that stretch reads EGSSSATSGADIPSSFDISS. Residues 5009–5023 are compositionally biased toward polar residues; it reads EATSGADTESISETT. Positions 5390–5407 are enriched in low complexity; that stretch reads RRSSGADSRASNDSSASR. Over residues 5486–5499 the composition is skewed to polar residues; sequence QISSRTESTNSRVS. The span at 5540-5550 shows a compositional bias: pro residues; that stretch reads PPIAISHPTPP. Positions 5560-5572 are enriched in low complexity; it reads RHSSGSSAHSQFG. Polar residues-rich tracts occupy residues 6225–6245 and 6270–6284; these read ASSG…TSGF and KTVS…MASR. Composition is skewed to basic and acidic residues over residues 6285 to 6303 and 6376 to 6422; these read KSSE…ESES and GEGE…EESL. Residues 6494–6505 show a composition bias toward polar residues; that stretch reads LGTSAPTKSIPS. The segment covering 6590–6600 has biased composition (low complexity); the sequence is SPSVMSSSIMS. Residues 6670-6687 are compositionally biased toward polar residues; that stretch reads ETDSSSSVITSRQPSRSP. A compositionally biased stretch (low complexity) spans 6735 to 6747; that stretch reads SQVPSRQPSRSPS. Basic and acidic residues-rich tracts occupy residues 6998–7008 and 7045–7069; these read TERKQREESPT and ARSR…HTPE. The span at 7071–7086 shows a compositional bias: low complexity; sequence SSTAVVTDVPSVSPVT. Basic and acidic residues predominate over residues 7155–7175; sequence TTKKTSDFDFPKETDEVFEKP. Residues 7248–7260 are compositionally biased toward acidic residues; it reads SDEESCSEDDEEY. Low complexity predominate over residues 7313-7331; the sequence is KTTTSQTPSTSTKPTVTAP. A compositionally biased stretch (basic and acidic residues) spans 7599–7609; that stretch reads SVRDDNERNEN. 2 stretches are compositionally biased toward low complexity: residues 7777 to 7788 and 7854 to 7880; these read SSASRPPSAAGS and AQTG…GSSS. The stretch at 7895-7915 forms a coiled coil; it reads KKELKDVLIQRKQRLEATEIE. Residues 8510-8562 form a disordered region; it reads SRRRAQETALTSSNKISTGSRSYARRPIRPSSYRNPEATNSMPDRHVARRTAE. Polar residues-rich tracts occupy residues 8517–8530 and 8541–8551; these read TALT…TGSR and SYRNPEATNSM. The span at 8552-8562 shows a compositional bias: basic and acidic residues; it reads PDRHVARRTAE. Positions 8570-8661 constitute a PDZ domain; it reads RILLTRSYKH…EIEMVIRTYK (92 aa). Positions 8714–8835 constitute a C2 domain; that stretch reads CHGHIQVSLG…SAINTGPRWY (122 aa).

Expressed in the nervous system.

The protein localises to the synapse. It localises to the cell projection. It is found in the axon. Required for synapse development in the active zone of presynaptic terminals of specific neurons including serotonergic NSM neurons. The active zone is a protein-dense neuronal region within the presynaptic bouton, from which synaptic vesicles send neurotransmitter signals across the synapse. Plays a role in the recruitment and clustering of synaptic vesicles in the active zone of presynaptic terminals in serotonergic NSM neurons, and coordinates the release of synaptic vesicles at presynaptic terminals to regulate neurotransmission at neuromuscular junctions. Regulates synapse number in inhibitory motor neurons and plays a role in spontaneous postsynaptic synaptic vesicle release in muscle cells. This chain is Protein clarinet, found in Caenorhabditis elegans.